The sequence spans 246 residues: Bis(5'-nucleosyl)-tetraphosphatase PrpE [asymmetrical] (246 aa).

It belongs to the PrpE family. Ni(2+) serves as cofactor.

The catalysed reaction is P(1),P(4)-bis(5'-guanosyl) tetraphosphate + H2O = GMP + GTP + 2 H(+). In terms of biological role, asymmetrically hydrolyzes Ap4p to yield AMP and ATP. This chain is Bis(5'-nucleosyl)-tetraphosphatase PrpE [asymmetrical], found in Bacillus cereus (strain Q1).